Consider the following 155-residue polypeptide: Ribosome maturation factor RimP (155 aa).

This sequence belongs to the RimP family.

It localises to the cytoplasm. Its function is as follows. Required for maturation of 30S ribosomal subunits. The sequence is that of Ribosome maturation factor RimP from Prochlorococcus marinus (strain MIT 9211).